The primary structure comprises 166 residues: Large ribosomal subunit protein uL10 (166 aa).

This sequence belongs to the universal ribosomal protein uL10 family. Part of the ribosomal stalk of the 50S ribosomal subunit. The N-terminus interacts with L11 and the large rRNA to form the base of the stalk. The C-terminus forms an elongated spine to which L12 dimers bind in a sequential fashion forming a multimeric L10(L12)X complex.

Forms part of the ribosomal stalk, playing a central role in the interaction of the ribosome with GTP-bound translation factors. This Staphylococcus carnosus (strain TM300) protein is Large ribosomal subunit protein uL10.